The sequence spans 306 residues: Pantothenate synthetase (306 aa).

ATP is bound at residue M37–H44. H44 serves as the catalytic Proton donor. Q69 serves as a coordination point for (R)-pantoate. Position 69 (Q69) interacts with beta-alanine. G155–D158 serves as a coordination point for ATP. Q161 lines the (R)-pantoate pocket. Residues V184 and K192–R195 each bind ATP.

This sequence belongs to the pantothenate synthetase family. As to quaternary structure, homodimer.

It localises to the cytoplasm. It catalyses the reaction (R)-pantoate + beta-alanine + ATP = (R)-pantothenate + AMP + diphosphate + H(+). Its pathway is cofactor biosynthesis; (R)-pantothenate biosynthesis; (R)-pantothenate from (R)-pantoate and beta-alanine: step 1/1. In terms of biological role, catalyzes the condensation of pantoate with beta-alanine in an ATP-dependent reaction via a pantoyl-adenylate intermediate. The protein is Pantothenate synthetase of Corynebacterium jeikeium (strain K411).